The primary structure comprises 441 residues: Vacuolar cation/proton exchanger 5 (441 aa).

A lipid anchor (N-myristoyl glycine) is attached at glycine 2. The Cytoplasmic segment spans residues 2–69 (GCCKVPALIQ…PNNSVLQSFK (68 aa)). S-palmitoyl cysteine attachment occurs at residues cysteine 3 and cysteine 4. The chain crosses the membrane as a helical span at residues 70 to 90 (IVILSNKLNLLLPFGPLAILL). Residues 91–97 (HYLTDNK) are Extracellular-facing. Residues 98 to 118 (GWIFLLSLVGITPLAERLGYA) form a helical membrane-spanning segment. Topologically, residues 119 to 129 (TEQLACYTGST) are cytoplasmic. The chain crosses the membrane as a helical span at residues 130 to 150 (VGGLLNATFGNVTELIISIFA). Residues 139 to 174 (GNVTELIISIFALKSGMIRVVQLTLLGSILSNMLLV) are cation selection. Residues 151-165 (LKSGMIRVVQLTLLG) are Extracellular-facing. The chain crosses the membrane as a helical span at residues 166 to 186 (SILSNMLLVLGCAFFCGGLVF). The Cytoplasmic segment spans residues 187-197 (SQKEQVFDKGN). A helical transmembrane segment spans residues 198–218 (AVVNSGLLLMAVMGLLFPAVL). Residues 219–231 (HYTHSEVHAGSSE) lie on the Extracellular side of the membrane. The helical transmembrane segment at 232-252 (LALSRFSSCIMLVAYAAYLFF) threads the bilayer. The Cytoplasmic portion of the chain corresponds to 253–286 (QLKSQPSSYTPLTEETNQNEETSDDDEDPEISKW). A helical transmembrane segment spans residues 287–307 (EAIIWLSILTAWVSLLSGYLV). At 308–311 (DAIE) the chain is on the extracellular side. A helical membrane pass occupies residues 312–332 (GASVSWKIPISFISVILLPIV). Topologically, residues 333 to 354 (GNAAEHAGAIMFAMKDKLDLSL) are cytoplasmic. Residues 333–368 (GNAAEHAGAIMFAMKDKLDLSLGVAIGSSIQISMFA) are cation selection. A helical transmembrane segment spans residues 355–375 (GVAIGSSIQISMFAVPFCVVI). Topologically, residues 376 to 384 (GWMMGAQMD) are extracellular. Residues 385 to 405 (LNFQLFETATLFITVIVVAFF) form a helical membrane-spanning segment. Residues 406-412 (LQEGTSN) lie on the Cytoplasmic side of the membrane. Residues 413–433 (YFKGLMLILCYLIVAASFFVH) traverse the membrane as a helical segment. Topologically, residues 434–441 (EDPHQDDI) are extracellular.

This sequence belongs to the Ca(2+):cation antiporter (CaCA) (TC 2.A.19) family. Cation/proton exchanger (CAX) subfamily.

The protein resides in the vacuole membrane. Vacuolar cation/proton exchanger (CAX). Translocates Ca(2+) and other metal ions into vacuoles using the proton gradient formed by H(+)-ATPase and H(+)-pyrophosphatase. This is Vacuolar cation/proton exchanger 5 (CAX5) from Arabidopsis thaliana (Mouse-ear cress).